Consider the following 92-residue polypeptide: UPF0250 protein XF_1271 (92 aa).

This sequence belongs to the UPF0250 family.

This chain is UPF0250 protein XF_1271, found in Xylella fastidiosa (strain 9a5c).